The sequence spans 432 residues: 5'-deoxyadenosine deaminase (432 aa).

2 residues coordinate Zn(2+): His-63 and His-65. Substrate contacts are provided by Glu-92 and His-184. Position 211 (His-211) interacts with Zn(2+). Positions 214 and 299 each coordinate substrate. Zn(2+) is bound at residue Asp-299.

The protein belongs to the metallo-dependent hydrolases superfamily. MTA/SAH deaminase family. As to quaternary structure, homotetramer. Zn(2+) is required as a cofactor.

It catalyses the reaction 5'-deoxyadenosine + H2O + H(+) = 5'-deoxyinosine + NH4(+). It carries out the reaction S-adenosyl-L-homocysteine + H2O + H(+) = S-inosyl-L-homocysteine + NH4(+). The catalysed reaction is S-methyl-5'-thioadenosine + H2O + H(+) = S-methyl-5'-thioinosine + NH4(+). The enzyme catalyses adenosine + H2O + H(+) = inosine + NH4(+). It participates in amino-acid biosynthesis; S-adenosyl-L-methionine biosynthesis. In terms of biological role, catalyzes the deamination of three SAM-derived enzymatic products, namely 5'-deoxyadenosine, S-adenosyl-L-homocysteine, and 5'-methylthioadenosine, to produce the inosine analogs. Can also deaminate adenosine. The preferred substrate for this enzyme is 5'-deoxyadenosine, but all these substrates are efficiently deaminated. Likely functions in a S-adenosyl-L-methionine (SAM) recycling pathway from S-adenosyl-L-homocysteine (SAH) produced from SAM-dependent methylation reactions. May also be involved in the recycling of 5'-deoxyadenosine, whereupon the 5'-deoxyribose moiety of 5'-deoxyinosine is further metabolized to deoxyhexoses used for the biosynthesis of aromatic amino acids in methanogens. The protein is 5'-deoxyadenosine deaminase of Methanosarcina mazei (strain ATCC BAA-159 / DSM 3647 / Goe1 / Go1 / JCM 11833 / OCM 88) (Methanosarcina frisia).